The chain runs to 190 residues: Biphenyl-2,3-diol 1,2-dioxygenase 2 (190 aa).

The region spanning 6–124 (KFAHVVLQTS…DGNFVELQID (119 aa)) is the VOC domain. Positions 9, 72, and 120 each coordinate Fe cation.

Belongs to the extradiol ring-cleavage dioxygenase family. In terms of assembly, homohexamer. Requires Fe(2+) as cofactor.

It catalyses the reaction biphenyl-2,3-diol + O2 = 2-hydroxy-6-oxo-6-phenylhexa-2,4-dienoate + H(+). It functions in the pathway xenobiotic degradation; biphenyl degradation; 2-hydroxy-2,4-pentadienoate and benzoate from biphenyl: step 3/4. The protein is Biphenyl-2,3-diol 1,2-dioxygenase 2 (bphC2) of Rhodococcus globerulus.